We begin with the raw amino-acid sequence, 712 residues long: Dynamin-1-like protein drp-1 (712 aa).

Residues 24 to 304 (QIQLPQIVVV…LMHHIRNCLP (281 aa)) form the Dynamin-type G domain. The G1 motif stretch occupies residues 34-41 (GSQSAGKS). Positions 60–62 (VTR) are G2 motif. Residues 148–151 (DLPG) are G3 motif. The G4 motif stretch occupies residues 217-220 (TKLD). A G5 motif region spans residues 247 to 250 (VNRS). Residues 280-502 (SRNGTPYLAK…LAYINTKHPE (223 aa)) form an interaction with caspase ced-9 region. Positions 523–542 (GRSRNRHASTGERAVSAHGE) are disordered. The region spanning 620–711 (VAIIERLIRN…IISEVRETQV (92 aa)) is the GED domain.

This sequence belongs to the TRAFAC class dynamin-like GTPase superfamily. Dynamin/Fzo/YdjA family. Interacts (via residues 280-502) with caspase ced-9; the interaction is enhanced by GTP rather than GDP; the interaction is probably direct and may occur at the mitochondrion. In terms of tissue distribution, highly expressed in neurons, in intestinal cells and in the body wall, pharyngeal, and vulval muscles.

Its subcellular location is the mitochondrion. The protein localises to the mitochondrion outer membrane. The protein resides in the cytoplasm. It localises to the cytosol. The catalysed reaction is GTP + H2O = GDP + phosphate + H(+). With respect to regulation, GTPase activity is increased by binding to phospholipid membranes. Its function is as follows. Functions in mitochondrial division. Functions in peroxisomal division. Mediates membrane fission, perhaps mainly of the mitochondrial outer membrane. Mitochondrial fission may be promoted by recruitment to mitochondrial membranes via the egl-1/ced-9 complex. Involved in the coordination of mitochondrial division with autophagy in response to acute heat stress during larval development. Plays a role in apoptosis by promoting mitochondrial elimination and cell-death execution, acting downstream of caspase ced-3, and perhaps independently of FIS1-related protein fis-2, caspase ced-9 and apoptosis-inducing factor AIFM/wah-1. Role in promoting apoptosis dependent upon cleavage of drp-1 by ced-3. Involved in negatively modulating longevity in concert with the Insulin/IGF-1-like signaling (IIS) mediated pathway. This Caenorhabditis elegans protein is Dynamin-1-like protein drp-1.